A 161-amino-acid polypeptide reads, in one-letter code: Phosphopantetheine adenylyltransferase (161 aa).

Ser-8 serves as a coordination point for substrate. ATP-binding positions include 8-9 (SF) and His-16. Substrate is bound by residues 36–40 (ENPRK), Leu-72, and Arg-86. Residues 87–89 (GLR), Glu-97, and 122–128 (FSFISSS) contribute to the ATP site. Glu-132 contacts substrate.

Belongs to the bacterial CoaD family. As to quaternary structure, homohexamer. It depends on Mg(2+) as a cofactor.

Its subcellular location is the cytoplasm. The enzyme catalyses (R)-4'-phosphopantetheine + ATP + H(+) = 3'-dephospho-CoA + diphosphate. The protein operates within cofactor biosynthesis; coenzyme A biosynthesis; CoA from (R)-pantothenate: step 4/5. Reversibly transfers an adenylyl group from ATP to 4'-phosphopantetheine, yielding dephospho-CoA (dPCoA) and pyrophosphate. The polypeptide is Phosphopantetheine adenylyltransferase (Thermotoga maritima (strain ATCC 43589 / DSM 3109 / JCM 10099 / NBRC 100826 / MSB8)).